A 124-amino-acid chain; its full sequence is MLVIFLGILGLLANQVLGLPTQAEGHLRSTDNPPQEELGYWCTYMESCKFCWECEHGICKNKVNRSMPWIIENSYLTSCEVSRWYNQCTYDEGNGHYHVMDCSNPVPHNRPHRLGRKIYEKEDL.

An N-terminal signal peptide occupies residues 1-18; the sequence is MLVIFLGILGLLANQVLG. N-linked (GlcNAc...) asparagine; by host glycosylation occurs at asparagine 64. The Prevents secretion from ER signature appears at 121-124; the sequence is KEDL.

It belongs to the asfivirus MGF 110 family.

Its subcellular location is the virion. It is found in the host endoplasmic reticulum-Golgi intermediate compartment. Causes the redistribution of lumenal ER protein to an enlarged ERGIC compartment. In Ornithodoros (relapsing fever ticks), this protein is Protein MGF 110-4L.